We begin with the raw amino-acid sequence, 481 residues long: UDP-N-acetylmuramoyl-L-alanyl-D-glutamate--L-lysine ligase (481 aa).

A UDP-N-acetyl-alpha-D-muramoyl-L-alanyl-D-glutamate-binding site is contributed by serine 42. 118 to 124 (GTKGKTT) provides a ligand contact to ATP. UDP-N-acetyl-alpha-D-muramoyl-L-alanyl-D-glutamate-binding positions include glutamine 158, 160-161 (TT), serine 187, and arginine 195. The residue at position 229 (lysine 229) is an N6-carboxylysine. Positions 404-407 (DDPN) match the L-lysine recognition motif motif.

The protein belongs to the MurCDEF family. MurE subfamily. In terms of processing, carboxylation is probably crucial for Mg(2+) binding and, consequently, for the gamma-phosphate positioning of ATP.

The protein localises to the cytoplasm. The catalysed reaction is UDP-N-acetyl-alpha-D-muramoyl-L-alanyl-D-glutamate + L-lysine + ATP = UDP-N-acetyl-alpha-D-muramoyl-L-alanyl-gamma-D-glutamyl-L-lysine + ADP + phosphate + H(+). It participates in cell wall biogenesis; peptidoglycan biosynthesis. Functionally, catalyzes the addition of L-lysine to the nucleotide precursor UDP-N-acetylmuramoyl-L-alanyl-D-glutamate (UMAG) in the biosynthesis of bacterial cell-wall peptidoglycan. The chain is UDP-N-acetylmuramoyl-L-alanyl-D-glutamate--L-lysine ligase from Streptococcus pyogenes serotype M18 (strain MGAS8232).